Consider the following 440-residue polypeptide: Protein eva-1 homolog C (440 aa).

Residues 1–13 (MLLPGHPRPPPAP) are compositionally biased toward pro residues. Residues 1–23 (MLLPGHPRPPPAPQSAQNQGLRR) are disordered. Residues 1–48 (MLLPGHPRPPPAPQSAQNQGLRRQVEPPGQLLRLFYCTVLVCSKETSA) form the signal peptide. The Extracellular portion of the chain corresponds to 49–321 (LTDFSGYLTK…AYIRAHPERA (273 aa)). Asn-62, Asn-109, and Asn-165 each carry an N-linked (GlcNAc...) asparagine glycan. Positions 67 to 159 (ACDGDYLNLQ…KYLLVSFKCQ (93 aa)) constitute an SUEL-type lectin 1 domain. An SUEL-type lectin 2 domain is found at 168–260 (VCENQELKLH…KYLTVAYACV (93 aa)). A helical transmembrane segment spans residues 322 to 342 (ALLFMSSVCIGLLLTLCALVI). The Cytoplasmic portion of the chain corresponds to 343 to 440 (RVSCTKDFRE…SLPRNVGHFY (98 aa)). The disordered stretch occupies residues 364–384 (SDKAEEDSEEDLEEEDSSDSQ). Acidic residues predominate over residues 367–381 (AEEDSEEDLEEEDSS).

The protein belongs to the EVA1 family. As to expression, ubiquitous.

The protein resides in the cell membrane. Its function is as follows. Binds heparin. The polypeptide is Protein eva-1 homolog C (Eva1c) (Mus musculus (Mouse)).